The primary structure comprises 48 residues: Phosphatidylserine decarboxylase proenzyme (48 aa).

It belongs to the phosphatidylserine decarboxylase family. Type 1 subfamily. Requires pyruvate as cofactor.

It catalyses the reaction a 1,2-diacyl-sn-glycero-3-phospho-L-serine + H(+) = a 1,2-diacyl-sn-glycero-3-phosphoethanolamine + CO2. It functions in the pathway phospholipid metabolism; phosphatidylethanolamine biosynthesis; phosphatidylethanolamine from CDP-diacylglycerol: step 2/2. The protein is Phosphatidylserine decarboxylase proenzyme (psd) of Azotobacter vinelandii.